Reading from the N-terminus, the 269-residue chain is Cytochrome c oxidase subunit 3 (269 aa).

7 consecutive transmembrane segments (helical) span residues 21–41 (PWPIVVSFALMSLALSLALTM), 45–65 (IGHMYLIYLSILTVTLSATLW), 90–110 (GFLLFVVSEILIFAALFWAYF), 138–160 (PLLNTIILLSSGATITYSHHGLV), 167–187 (ALSGLLITFWLIVIFVTCQYI), 205–225 (FYAGTGLHFLHMVMLAAMLGI), and 247–267 (VLYCHILDIIWLFLYIVFYWW).

This sequence belongs to the cytochrome c oxidase subunit 3 family. Component of the cytochrome c oxidase (complex IV, CIV), a multisubunit enzyme composed of a catalytic core of 3 subunits and several supernumerary subunits. The complex exists as a monomer or a dimer and forms supercomplexes (SCs) in the inner mitochondrial membrane with ubiquinol-cytochrome c oxidoreductase (cytochrome b-c1 complex, complex III, CIII).

It is found in the mitochondrion inner membrane. It carries out the reaction 4 Fe(II)-[cytochrome c] + O2 + 8 H(+)(in) = 4 Fe(III)-[cytochrome c] + 2 H2O + 4 H(+)(out). In terms of biological role, component of the cytochrome c oxidase, the last enzyme in the mitochondrial electron transport chain which drives oxidative phosphorylation. The respiratory chain contains 3 multisubunit complexes succinate dehydrogenase (complex II, CII), ubiquinol-cytochrome c oxidoreductase (cytochrome b-c1 complex, complex III, CIII) and cytochrome c oxidase (complex IV, CIV), that cooperate to transfer electrons derived from NADH and succinate to molecular oxygen, creating an electrochemical gradient over the inner membrane that drives transmembrane transport and the ATP synthase. Cytochrome c oxidase is the component of the respiratory chain that catalyzes the reduction of oxygen to water. Electrons originating from reduced cytochrome c in the intermembrane space (IMS) are transferred via the dinuclear copper A center (CU(A)) of subunit 2 and heme A of subunit 1 to the active site in subunit 1, a binuclear center (BNC) formed by heme A3 and copper B (CU(B)). The BNC reduces molecular oxygen to 2 water molecules using 4 electrons from cytochrome c in the IMS and 4 protons from the mitochondrial matrix. This is Cytochrome c oxidase subunit 3 (COX3) from Kluyveromyces lactis (strain ATCC 8585 / CBS 2359 / DSM 70799 / NBRC 1267 / NRRL Y-1140 / WM37) (Yeast).